A 215-amino-acid chain; its full sequence is Probable phosphoglycerate mutase GpmB (215 aa).

Substrate is bound by residues 8–15 (RHGETQWN), 21–22 (QG), arginine 58, arginine 60, 82–85 (ELNM), 104–105 (RR), and 151–152 (GI). The active-site Tele-phosphohistidine intermediate is histidine 9. The active-site Proton donor/acceptor is the glutamate 82.

This sequence belongs to the phosphoglycerate mutase family. GpmB subfamily.

It catalyses the reaction (2R)-2-phosphoglycerate = (2R)-3-phosphoglycerate. It functions in the pathway carbohydrate degradation; glycolysis; pyruvate from D-glyceraldehyde 3-phosphate: step 3/5. In Escherichia coli O9:H4 (strain HS), this protein is Probable phosphoglycerate mutase GpmB.